A 617-amino-acid chain; its full sequence is Melatonin-related receptor (617 aa).

Over 1–30 (MGPTLAVPTPYGCIGCKLPQPEYPPALIIF) the chain is Extracellular. The chain crosses the membrane as a helical span at residues 31-51 (MFCAMVITIVVDLIGNSMVIL). Over 52-64 (AVTKNKKLRNSGN) the chain is Cytoplasmic. The helical transmembrane segment at 65–85 (IFVVSLSVADMLVAIYPYPLM) threads the bilayer. The Extracellular portion of the chain corresponds to 86-103 (LHAMSIGGWDLSQLQCQM). C101 and C178 are oxidised to a cystine. Residues 104 to 124 (VGFITGLSVVGSIFNIVAIAI) form a helical membrane-spanning segment. Topologically, residues 125–143 (NRYCYICHSLQYERIFSVR) are cytoplasmic. The chain crosses the membrane as a helical span at residues 144–164 (NTCIYLVITWIMTVLAVLPNM). The Extracellular portion of the chain corresponds to 165 to 188 (YIGTIEYDPRTYTCIFNYLNNPVF). A helical membrane pass occupies residues 189–209 (TVTIVCIHFVLPLLIVGFCYV). Residues 210-239 (RIWTKVLAARDPAGQNPDNQLAEVRNFLTM) are Cytoplasmic-facing. A helical transmembrane segment spans residues 240 to 260 (FVIFLLFAVCWCPINVLTVLV). At 261–273 (AVSPKEMAGKIPN) the chain is on the extracellular side. A helical transmembrane segment spans residues 274–294 (WLYLAAYFIAYFNSCLNAVIY). At 295 to 617 (GLLNENFRRE…VEDDPDEMAV (323 aa)) the chain is on the cytoplasmic side. 2 disordered regions span residues 340 to 438 (AHAR…ATVY) and 464 to 596 (SVHF…VTTS). Residues 341–353 (HARDQAREQDRAH) are compositionally biased toward basic and acidic residues. Over residues 485 to 500 (GSHSKSAFSAATSHPK) the composition is skewed to polar residues.

It belongs to the G-protein coupled receptor 1 family. In terms of assembly, homodimer, and heterodimer with MTNR1A and MTNR1B. Interacts with KAT5. Interacts with RTN4 isoform A/NOGO-A. Interacts with TGFBR1. As to quaternary structure, interacts with GTF2I. In terms of processing, cleaved by CAPN1 in a calcium-dependent manner. In terms of tissue distribution, hypothalamus and pituitary.

It localises to the cell membrane. Its subcellular location is the postsynaptic density. It is found in the nucleus. Functionally, g protein-coupled receptor that plays a role in numerous physiological processes including regulation of energy metabolism, neurite outgrowth or cell migration. Promotes self-renewal and neuronal differentiation of neural progenitor cells through activation of the NOTCH and WNT/beta-catenin signaling pathways. Modulates the KAT5-dependent glucocorticoid receptor signaling by modulating KAT5 subcellular compartmentalisation. Also plays a role in the activation TGFBR1 in the absence of TGFBR2 by interfering with FKBP1A binding to TGFBR1, leading to induction of both canonical and non-canonical SMAD signaling pathways resulting in inhibition of proliferation or promotion of migration. Its function is as follows. Upon cleavage by CAPN1, functions as a scaffold in the nucleus for interacting partners such as GTF2I to promote FOS promoter activation. This Homo sapiens (Human) protein is Melatonin-related receptor (GPR50).